The sequence spans 273 residues: Large ribosomal subunit protein uL2 (273 aa).

The disordered stretch occupies residues 228–273; sequence VDHPHGGGEGKTSGGRHPVTPWGFPTKGKKTRKNKRTSKFIVKKRK. Basic residues predominate over residues 254–273; it reads KGKKTRKNKRTSKFIVKKRK.

It belongs to the universal ribosomal protein uL2 family. In terms of assembly, part of the 50S ribosomal subunit. Forms a bridge to the 30S subunit in the 70S ribosome.

Functionally, one of the primary rRNA binding proteins. Required for association of the 30S and 50S subunits to form the 70S ribosome, for tRNA binding and peptide bond formation. It has been suggested to have peptidyltransferase activity; this is somewhat controversial. Makes several contacts with the 16S rRNA in the 70S ribosome. This is Large ribosomal subunit protein uL2 from Rickettsia akari (strain Hartford).